Consider the following 183-residue polypeptide: Cell division protein ZapC (183 aa).

It belongs to the ZapC family. Interacts directly with FtsZ.

The protein resides in the cytoplasm. Its function is as follows. Contributes to the efficiency of the cell division process by stabilizing the polymeric form of the cell division protein FtsZ. Acts by promoting interactions between FtsZ protofilaments and suppressing the GTPase activity of FtsZ. This chain is Cell division protein ZapC, found in Proteus mirabilis (strain HI4320).